The following is a 526-amino-acid chain: G-protein coupled receptor 161 (526 aa).

At 1–27 (MNGSKNGTAVANSTNGLDDNGLMVLES) the chain is on the extracellular side. N-linked (GlcNAc...) asparagine glycosylation is found at asparagine 2, asparagine 6, and asparagine 12. Residues 28 to 48 (VSIIIIAILACLGNLVIVVTL) traverse the membrane as a helical segment. The Cytoplasmic portion of the chain corresponds to 49 to 60 (YKKPYLLTPSNK). A helical membrane pass occupies residues 61–81 (FVFSLTSSNLLLSVLMLPFVV). At 82–98 (ASSVRRDWMFGVVWCNF) the chain is on the extracellular side. Cysteines 96 and 174 form a disulfide. Asparagine 97 is a glycosylation site (N-linked (GlcNAc...) asparagine). Residues 99-119 (TALLHLLVSSSSMLTLGAIAI) traverse the membrane as a helical segment. At 120-139 (DRYYAVLYPMIYPMKITGNR) the chain is on the cytoplasmic side. Residues 140–160 (AVLAIVYIWLHSLVGCLPPLF) form a helical membrane-spanning segment. Over 161 to 186 (GWSSFEFDRFKWTCTVSWHKEISYTA) the chain is Extracellular. A helical transmembrane segment spans residues 187–207 (FWVTWCCLLPLVAMLVCYGVI). The Cytoplasmic segment spans residues 208–263 (FRVARIKARKVYCGSVVVSQEESSSQNNGRKNSNTSTSSSGSRKSLIYSGSQCKAF). The disordered stretch occupies residues 231–250 (SSQNNGRKNSNTSTSSSGSR). A helical transmembrane segment spans residues 264–284 (ITILVVLGTFLTTWGPYVVVI). Residues 285 to 300 (STEALLGKNSVSPQVE) lie on the Extracellular side of the membrane. Residues 301–321 (TLVSWLSFTSAVCHPLIYGLW) traverse the membrane as a helical segment. The Cytoplasmic segment spans residues 322-526 (NKTVRKELLG…EEEMEREEKM (205 aa)). The tract at residues 505 to 526 (IDEGIVKDDDDDEEEMEREEKM) is disordered. Residues 512–526 (DDDDDEEEMEREEKM) are compositionally biased toward acidic residues.

The protein belongs to the G-protein coupled receptor 1 family.

Its subcellular location is the cell projection. The protein localises to the cilium membrane. It is found in the cell membrane. Its function is as follows. Key negative regulator of Shh signaling during neural tube development. Recruited to primary cilia and acts as a regulator of the PKA-dependent basal repression machinery in Shh signaling by increasing cAMP levels, leading to promote the PKA-dependent processing of gli3 into gli3r and repress the Shh signaling. In presence of shh, it is removed from primary cilia, preventing its activity and allowing activation of the Shh signaling. Required in left/right patterning by modulating Ca(2+) levels in the cells surrounding the Kupffer vesicle. This chain is G-protein coupled receptor 161 (gpr161), found in Danio rerio (Zebrafish).